Consider the following 762-residue polypeptide: MSNVDISNDGFIGLDYDSRNYLQPQSWPVAVDHQASHRAEGARDISPLQTSGHAFEQSVAQDPNLMVDWQFQHMQPHLQYSHEEASSAPQFTTASYGMPIHSSPIDLISGTPQGPLSGSLLDGPYLPLSAPVDMVPFPYQDLQSDLMAFPSDGLAHGLPEIPSYAAPQNVIDSSSPADTYLEVRSLTSSSSDNGWSTIEPRRSHEYFPDQGFFINPTQTLHDRSLSESSYSTSYGSFVEISNPVNSPSSDTNFDAAFNNTMTRRVSFDHTSHGSQSPTAVSPVAIVRPIPVPMKKPSSPTRSTGSSSSTSPPTRKPSRKSPIAAKTAETKVRKQSQNGKPETEKRVGKRKGPLKPDQRKQASEIRKLRACLRCKFLKKTCDKGEPCAGCQPSHARLWQVPCTRIDIKEIGYFMKDWKADYERHISLGFSVGNIKGFSEHERTLFITHGYGQILPINAREVYVHNDQCFNVDWVETYNRGPTKYEVETAKLSAGMEGISHAMLSDYLDRHIDGNGTFEKFVDDYFEGTPFLTQMLKTAFRFYYRTKMPVIRKALKLIVAYNLTLHITLVEGLGEEDGLLGKVDVEGSKFKGKTLAPVMINFQIKCAMANMWRELQKDVLEELSSLYSSVYSGEKLKNWPTIFILASILLAVWEEMQFDCHYRTRDPAAVEKFCNDMETTPVGVIVGLFQAISQKLPAFTEWETQKHHHLLHSNPDVCSAMTEVRQHVTQYESYLRSRSSSKFNPKDFDCLSNKFVSRLVVRAN.

The tract at residues 267 to 361 (FDHTSHGSQS…PLKPDQRKQA (95 aa)) is disordered. The segment covering 294 to 312 (KKPSSPTRSTGSSSSTSPP) has biased composition (low complexity). The segment at residues 370–401 (CLRCKFLKKTCDKGEPCAGCQPSHARLWQVPC) is a DNA-binding region (zn(2)-C6 fungal-type).

Its subcellular location is the nucleus. Transcription factor that regulates conidiation as well as kojic acid production, likely by negatively controlling kojR and kojA expression. The protein is Transcription factor kpeA of Aspergillus oryzae (strain ATCC 42149 / RIB 40) (Yellow koji mold).